The primary structure comprises 868 residues: Translation initiation factor IF-2 (868 aa).

Composition is skewed to basic and acidic residues over residues 156-166 (ETVKEEEKINS) and 199-209 (SKKEEVKPEKV). Disordered stretches follow at residues 156–177 (ETVK…QDEL) and 199–269 (SKKE…KYRE). The span at 249–260 (RGGRSKFKKKKG) shows a compositional bias: basic residues. Residues 368 to 537 (GRAPVVTIMG…LLQSEVLELK (170 aa)) form the tr-type G domain. A G1 region spans residues 377–384 (GHVDHGKT). Residue 377 to 384 (GHVDHGKT) coordinates GTP. The segment at 402–406 (GITQH) is G2. The segment at 423 to 426 (DTPG) is G3. GTP-binding positions include 423-427 (DTPGH) and 477-480 (NKMD). Positions 477–480 (NKMD) are G4. The G5 stretch occupies residues 513 to 515 (SAK).

The protein belongs to the TRAFAC class translation factor GTPase superfamily. Classic translation factor GTPase family. IF-2 subfamily.

Its subcellular location is the cytoplasm. One of the essential components for the initiation of protein synthesis. Protects formylmethionyl-tRNA from spontaneous hydrolysis and promotes its binding to the 30S ribosomal subunits. Also involved in the hydrolysis of GTP during the formation of the 70S ribosomal complex. This chain is Translation initiation factor IF-2, found in Legionella pneumophila subsp. pneumophila (strain Philadelphia 1 / ATCC 33152 / DSM 7513).